The primary structure comprises 445 residues: Ribosomal protein uS12 methylthiotransferase RimO (445 aa).

In terms of domain architecture, MTTase N-terminal spans 10–120 (PKVGFVSLGC…VVNAVHEVVP (111 aa)). Positions 19, 55, 84, 153, 157, and 160 each coordinate [4Fe-4S] cluster. One can recognise a Radical SAM core domain in the interval 139 to 378 (LTPRHYAYLK…AHQQEISSAR (240 aa)). In terms of domain architecture, TRAM spans 380–445 (QQRIGKEIEV…DEYDLWAETL (66 aa)).

It belongs to the methylthiotransferase family. RimO subfamily. Requires [4Fe-4S] cluster as cofactor.

It is found in the cytoplasm. It carries out the reaction L-aspartate(89)-[ribosomal protein uS12]-hydrogen + (sulfur carrier)-SH + AH2 + 2 S-adenosyl-L-methionine = 3-methylsulfanyl-L-aspartate(89)-[ribosomal protein uS12]-hydrogen + (sulfur carrier)-H + 5'-deoxyadenosine + L-methionine + A + S-adenosyl-L-homocysteine + 2 H(+). Its function is as follows. Catalyzes the methylthiolation of an aspartic acid residue of ribosomal protein uS12. This Pseudomonas fluorescens (strain ATCC BAA-477 / NRRL B-23932 / Pf-5) protein is Ribosomal protein uS12 methylthiotransferase RimO.